A 107-amino-acid polypeptide reads, in one-letter code: Cell division protein FtsB (107 aa).

Residues 1 to 3 lie on the Cytoplasmic side of the membrane; the sequence is MGK. A helical membrane pass occupies residues 4–21; that stretch reads LTLLLLILLGWLQYSLWL. Over 22 to 107 the chain is Periplasmic; that stretch reads GKNGVHDFVR…IPSTQNNAQQ (86 aa). Residues 39 to 62 adopt a coiled-coil conformation; sequence QEVNNGKLKARNDQLFAEIDDLNG.

This sequence belongs to the FtsB family. Part of a complex composed of FtsB, FtsL and FtsQ.

It localises to the cell inner membrane. Functionally, essential cell division protein. May link together the upstream cell division proteins, which are predominantly cytoplasmic, with the downstream cell division proteins, which are predominantly periplasmic. The protein is Cell division protein FtsB of Yersinia enterocolitica serotype O:8 / biotype 1B (strain NCTC 13174 / 8081).